The following is a 101-amino-acid chain: Small ribosomal subunit protein uS14 (101 aa).

This sequence belongs to the universal ribosomal protein uS14 family. Part of the 30S ribosomal subunit. Contacts proteins S3 and S10.

Binds 16S rRNA, required for the assembly of 30S particles and may also be responsible for determining the conformation of the 16S rRNA at the A site. This is Small ribosomal subunit protein uS14 from Cronobacter sakazakii (strain ATCC BAA-894) (Enterobacter sakazakii).